The sequence spans 221 residues: Probable N-acetyl-alpha-D-glucosaminyl L-malate deacetylase 2 (221 aa).

Zn(2+) is bound by residues histidine 11, aspartate 14, and histidine 125.

Belongs to the PIGL family. Requires Zn(2+) as cofactor.

It carries out the reaction (S)-malyl N-acetyl-alpha-D-glucosaminide + H2O = (S)-malyl alpha-D-glucosaminide + acetate. In terms of biological role, involved in bacillithiol (BSH) biosynthesis. Catalyzes the second step of the pathway, the deacetylation of N-acetylglucosaminylmalate (GlcNAc-Mal) to glucosamine malate (GlcN-Mal). The protein is Probable N-acetyl-alpha-D-glucosaminyl L-malate deacetylase 2 of Bacillus subtilis (strain 168).